Consider the following 223-residue polypeptide: Thymine-DNA glycosylase (223 aa).

4 residues coordinate [4Fe-4S] cluster: C201, C208, C211, and C217.

The protein belongs to the Nth/MutY family. Requires [4Fe-4S] cluster as cofactor.

It carries out the reaction Hydrolyzes mismatched double-stranded DNA and polynucleotides, releasing free thymine.. With respect to regulation, thymine cleavage is completely inhibited by Ni(2+), Co(2+), Zn(2+), Cu(2+) and Mn(2+). Activity is not affected by Mg(2+) and Ca(2+). Functionally, DNA glycosylase that excises thymine from T/G mismatches. Also has a weak DNA glycosylase activity on uracil paired with various bases. This Aeropyrum pernix (strain ATCC 700893 / DSM 11879 / JCM 9820 / NBRC 100138 / K1) protein is Thymine-DNA glycosylase.